A 421-amino-acid chain; its full sequence is Gamma-glutamyl phosphate reductase (421 aa).

The protein belongs to the gamma-glutamyl phosphate reductase family.

The protein localises to the cytoplasm. The enzyme catalyses L-glutamate 5-semialdehyde + phosphate + NADP(+) = L-glutamyl 5-phosphate + NADPH + H(+). Its pathway is amino-acid biosynthesis; L-proline biosynthesis; L-glutamate 5-semialdehyde from L-glutamate: step 2/2. Its function is as follows. Catalyzes the NADPH-dependent reduction of L-glutamate 5-phosphate into L-glutamate 5-semialdehyde and phosphate. The product spontaneously undergoes cyclization to form 1-pyrroline-5-carboxylate. This chain is Gamma-glutamyl phosphate reductase, found in Pseudomonas fluorescens (strain ATCC BAA-477 / NRRL B-23932 / Pf-5).